Reading from the N-terminus, the 228-residue chain is E3 ubiquitin-protein ligase RNF114 (228 aa).

The segment at 29-68 (CPVCLEVYEKPVQVPCGHVFCSACLQECLKPKKPVCGVCR) adopts an RING-type zinc-finger fold. Cysteine 91 and cysteine 94 together coordinate Zn(2+). The C2HC RNF-type zinc finger occupies 91 to 110 (CHGCRKNFFLSKIRAHVATC). Lysine 102 is subject to N6-acetyllysine. Histidine 106 and cysteine 110 together coordinate Zn(2+). Lysine 112 is subject to N6-acetyllysine.

As to quaternary structure, interacts with XAF1, the interaction increases XAF1 stability and proapoptotic effects, and may regulate IFN signaling. Post-translationally, autoubiquitinated. Polyubiquitinated in the presence of E2 enzymes UBE2D1, UBE2D2 and UBE2D3, but only monoubiquitinated in the presence of UBE2E1.

Its subcellular location is the cytoplasm. It localises to the nucleus. It catalyses the reaction S-ubiquitinyl-[E2 ubiquitin-conjugating enzyme]-L-cysteine + [acceptor protein]-L-lysine = [E2 ubiquitin-conjugating enzyme]-L-cysteine + N(6)-ubiquitinyl-[acceptor protein]-L-lysine.. It participates in protein modification; protein ubiquitination. E3 ubiquitin-protein ligase that promotes the ubiquitination of various substrates. In turn, participates in the regulation of many biological processes including cell cycle, apoptosis, osteoclastogenesis as well as innate or adaptive immunity. Acts as negative regulator of NF-kappa-B-dependent transcription by promoting the ubiquitination and stabilization of the NF-kappa-B inhibitor TNFAIP3. May promote the ubiquitination of TRAF6 as well. Also acts as a negative regulator of T-cell activation. Inhibits cellular dsRNA responses and interferon production by targeting MAVS component for proteasomal degradation. Ubiquitinates the CDK inhibitor CDKN1A leading to its degradationand probably also CDKN1B and CDKN1C. This activity stimulates cell cycle G1-to-S phase transition and suppresses cellular senescence. May play a role in spermatogenesis. Inhibits classical swine fever virus replication by mediating 'K27'-linked ubiquitination of viral NS4B and inducing its degradation via the proteasome. In Sus scrofa (Pig), this protein is E3 ubiquitin-protein ligase RNF114 (RNF114).